A 272-amino-acid polypeptide reads, in one-letter code: Shikimate dehydrogenase (NADP(+)) (272 aa).

Shikimate-binding positions include serine 14–serine 16 and threonine 61. Catalysis depends on lysine 65, which acts as the Proton acceptor. Glutamate 77 lines the NADP(+) pocket. Asparagine 86 and aspartate 102 together coordinate shikimate. Residues glycine 126–alanine 130, asparagine 149–arginine 154, and methionine 213 each bind NADP(+). Tyrosine 215 contributes to the shikimate binding site. An NADP(+)-binding site is contributed by glycine 237.

Belongs to the shikimate dehydrogenase family. In terms of assembly, homodimer.

The catalysed reaction is shikimate + NADP(+) = 3-dehydroshikimate + NADPH + H(+). The protein operates within metabolic intermediate biosynthesis; chorismate biosynthesis; chorismate from D-erythrose 4-phosphate and phosphoenolpyruvate: step 4/7. Involved in the biosynthesis of the chorismate, which leads to the biosynthesis of aromatic amino acids. Catalyzes the reversible NADPH linked reduction of 3-dehydroshikimate (DHSA) to yield shikimate (SA). The sequence is that of Shikimate dehydrogenase (NADP(+)) from Salmonella paratyphi A (strain ATCC 9150 / SARB42).